We begin with the raw amino-acid sequence, 286 residues long: Pantothenate synthetase (286 aa).

An ATP-binding site is contributed by Met-30 to His-37. The active-site Proton donor is the His-37. Gln-61 serves as a coordination point for (R)-pantoate. Beta-alanine is bound at residue Gln-61. An ATP-binding site is contributed by Gly-149–Asp-152. Gln-155 contributes to the (R)-pantoate binding site. Residues Val-178 and Met-186–Arg-189 each bind ATP.

This sequence belongs to the pantothenate synthetase family. As to quaternary structure, homodimer.

The protein resides in the cytoplasm. It carries out the reaction (R)-pantoate + beta-alanine + ATP = (R)-pantothenate + AMP + diphosphate + H(+). It functions in the pathway cofactor biosynthesis; (R)-pantothenate biosynthesis; (R)-pantothenate from (R)-pantoate and beta-alanine: step 1/1. Functionally, catalyzes the condensation of pantoate with beta-alanine in an ATP-dependent reaction via a pantoyl-adenylate intermediate. The protein is Pantothenate synthetase of Alkalilimnicola ehrlichii (strain ATCC BAA-1101 / DSM 17681 / MLHE-1).